Reading from the N-terminus, the 635-residue chain is Probable clathrin assembly protein At4g32285 (635 aa).

An ENTH domain is found at 23–159 (VASNMAPDLE…ELALFERRGR (137 aa)). Residues 157–208 (RGRNGGGSSSSHQSNGDDGYNRSRDDFRSPPPRTYDYETGNGFGMPKRSRSF) are disordered. Positions 165–174 (SSSHQSNGDD) are enriched in low complexity. Positions 175–184 (GYNRSRDDFR) are enriched in basic and acidic residues. Ser-207 is modified (phosphoserine). Thr-224 carries the post-translational modification Phosphothreonine. Positions 357 to 369 (AKRAKSPERKEIE) are enriched in basic and acidic residues. The segment at 357–412 (AKRAKSPERKEIEAPPAPAPPVEEPVDMNEIKALPPPENHTPPPPPAPEPKPQQPQ) is disordered. Pro residues predominate over residues 390–409 (LPPPENHTPPPPPAPEPKPQ).

It is found in the membrane. The protein localises to the clathrin-coated pit. It localises to the golgi apparatus. Its subcellular location is the cytoplasmic vesicle. The protein resides in the clathrin-coated vesicle. The sequence is that of Probable clathrin assembly protein At4g32285 from Arabidopsis thaliana (Mouse-ear cress).